The sequence spans 858 residues: Receptor-like protein kinase ANXUR2 (858 aa).

The first 27 residues, 1–27 (MNEKLRILFSFLCFFYVLLVSPSQSNG), serve as a signal peptide directing secretion. At 28–431 (QDISLSCGAS…VKKDFQGDKR (404 aa)) the chain is on the extracellular side. Residues N133, N293, N303, and N331 are each glycosylated (N-linked (GlcNAc...) asparagine). A helical transmembrane segment spans residues 432-452 (ITAFVIGSAGGVAAVLFCALC). Residues 453–858 (FTMYQRKRKF…FSQIVNPKGR (406 aa)) lie on the Cytoplasmic side of the membrane. Residues 521–794 (FDESNVIGVG…GDVLWNLEFA (274 aa)) form the Protein kinase domain. Residues 527 to 535 (IGVGGFGKV) and K549 each bind ATP. Residue D645 is the Proton acceptor of the active site. The interval 800–858 (TADGSRHRTPSNGGGSVDLGGGGGGVTVNISAGESDLGDDLSSEENSGIFSQIVNPKGR) is disordered. The segment covering 811-825 (NGGGSVDLGGGGGGV) has biased composition (gly residues). Residues 843 to 858 (EENSGIFSQIVNPKGR) show a composition bias toward polar residues.

Belongs to the protein kinase superfamily. Ser/Thr protein kinase family. As to expression, expressed in pollen, but not in pistils or seedlings.

It localises to the cell membrane. It catalyses the reaction L-seryl-[protein] + ATP = O-phospho-L-seryl-[protein] + ADP + H(+). The enzyme catalyses L-threonyl-[protein] + ATP = O-phospho-L-threonyl-[protein] + ADP + H(+). In terms of biological role, receptor-like protein kinase that controls pollen tube behavior by directing rupture at proper timing to release the sperm cell. The chain is Receptor-like protein kinase ANXUR2 (ANX2) from Arabidopsis thaliana (Mouse-ear cress).